A 138-amino-acid polypeptide reads, in one-letter code: Superoxide dismutase [Mn] (138 aa).

4 residues coordinate Mn(2+): H2, H49, D133, and H137.

This sequence belongs to the iron/manganese superoxide dismutase family. It depends on Mn(2+) as a cofactor.

The catalysed reaction is 2 superoxide + 2 H(+) = H2O2 + O2. Destroys superoxide anion radicals which are normally produced within the cells and which are toxic to biological systems. The protein is Superoxide dismutase [Mn] (sodA) of Mycolicibacterium phlei (Mycobacterium phlei).